A 322-amino-acid chain; its full sequence is uncharacterized protein (322 aa).

Transmembrane regions (helical) follow at residues 159–179 (GIIFCIVSILYCIINIRMLYL), 203–223 (MNIPALGAWGSVVAITFYIWL), 234–254 (GGILTMTAFLLSAIAAIRVGL), 267–287 (FEGSSAVVIAIILGALPLIPY), and 296–316 (TLLSGYLSIVISMIINSFFAW).

The protein localises to the membrane. This is an uncharacterized protein from Dictyostelium discoideum (Social amoeba).